The following is a 467-amino-acid chain: Involucrin (467 aa).

Residues 48–467 (EIQEKGFPKH…ELENRTQQEK (420 aa)) are disordered. Residues 49-75 (IQEKGFPKHEEKRPNPVKDLPDQKCEH) show a composition bias toward basic and acidic residues. 2 stretches are compositionally biased toward low complexity: residues 76 to 95 (QQQP…QQEL) and 105 to 177 (QQLP…VPQE). Composition is skewed to basic and acidic residues over residues 178 to 192 (LHLR…DPEL) and 220 to 231 (RHQEPQEQELHL). A compositionally biased stretch (low complexity) spans 278–290 (QQQQESPEPELQL). Basic and acidic residues-rich tracts occupy residues 295-318 (QSHE…ELYL), 348-373 (LEEK…HEPD), 380-391 (EKQKLGEPELHL), 415-437 (KQEK…KELS), and 450-467 (KQLE…QQEK).

Belongs to the involucrin family. Directly or indirectly cross-linked to cornifelin (CNFN). Substrate of transglutaminase. Specific glutamines or lysines are cross-linked to keratins, desmoplakin and to inter involucrin molecules. In terms of tissue distribution, keratinocytes of epidermis and other stratified squamous epithelia.

The protein resides in the cytoplasm. Part of the insoluble cornified cell envelope (CE) of stratified squamous epithelia. This chain is Involucrin (Ivl), found in Mus musculus (Mouse).